The sequence spans 630 residues: ATP synthase subunit alpha (630 aa).

Residue 173–180 coordinates ATP; the sequence is GDRQTGKT. The disordered stretch occupies residues 592-630; sequence AGGASTAADEDGAGDDEEEAPAPKAKSKNAKSASKAKEK. Over residues 599–611 the composition is skewed to acidic residues; the sequence is ADEDGAGDDEEEA.

It belongs to the ATPase alpha/beta chains family. In terms of assembly, F-type ATPases have 2 components, CF(1) - the catalytic core - and CF(0) - the membrane proton channel. CF(1) has five subunits: alpha(3), beta(3), gamma(1), delta(1), epsilon(1). CF(0) has three main subunits: a(1), b(2) and c(9-12). The alpha and beta chains form an alternating ring which encloses part of the gamma chain. CF(1) is attached to CF(0) by a central stalk formed by the gamma and epsilon chains, while a peripheral stalk is formed by the delta and b chains.

Its subcellular location is the cell inner membrane. It catalyses the reaction ATP + H2O + 4 H(+)(in) = ADP + phosphate + 5 H(+)(out). Produces ATP from ADP in the presence of a proton gradient across the membrane. The alpha chain is a regulatory subunit. In Sorangium cellulosum (strain So ce56) (Polyangium cellulosum (strain So ce56)), this protein is ATP synthase subunit alpha.